Reading from the N-terminus, the 186-residue chain is Small ribosomal subunit protein uS19 (186 aa).

The interval 1-95 (MREAIKRYGS…YEELYAQYKQ (95 aa)) is unknown. A small ribosomal subunit protein uS19 region spans residues 96–186 (MTEKKAYVDP…EKTAKVVKKK (91 aa)).

It belongs to the universal ribosomal protein uS19 family.

Functionally, protein S19 forms a complex with S13 that binds strongly to the 16S ribosomal RNA. In Aquifex aeolicus (strain VF5), this protein is Small ribosomal subunit protein uS19.